A 303-amino-acid polypeptide reads, in one-letter code: N-acetyl-D-glucosamine kinase (303 aa).

Residues 4 to 11 (GFDIGGTK) and 133 to 140 (GVGGGLVL) contribute to the ATP site. The Zn(2+) site is built by histidine 157, cysteine 177, cysteine 179, and cysteine 184.

It belongs to the ROK (NagC/XylR) family. NagK subfamily.

The enzyme catalyses N-acetyl-D-glucosamine + ATP = N-acetyl-D-glucosamine 6-phosphate + ADP + H(+). It participates in cell wall biogenesis; peptidoglycan recycling. Functionally, catalyzes the phosphorylation of N-acetyl-D-glucosamine (GlcNAc) derived from cell-wall degradation, yielding GlcNAc-6-P. The chain is N-acetyl-D-glucosamine kinase from Salmonella choleraesuis (strain SC-B67).